The primary structure comprises 358 residues: Ganglioside-induced differentiation-associated protein 1 (358 aa).

In terms of domain architecture, GST N-terminal spans 24 to 105 (VKLILYHWTH…YLEQTFLDER (82 aa)). Glycyl lysine isopeptide (Lys-Gly) (interchain with G-Cter in ubiquitin) cross-links involve residues Lys50, Lys172, Lys173, Lys188, and Lys190. The region spanning 153 to 309 (PAYATTRIRS…LISAVLPTAF (157 aa)) is the GST C-terminal domain. Residue Lys203 is modified to N6-acetyllysine; alternate. A Glycyl lysine isopeptide (Lys-Gly) (interchain with G-Cter in ubiquitin); alternate cross-link involves residue Lys203. Glycyl lysine isopeptide (Lys-Gly) (interchain with G-Cter in ubiquitin) cross-links involve residues Lys206, Lys207, and Lys214. The next 2 membrane-spanning stretches (helical) occupy residues 292–312 (VLGH…FRVA) and 320–340 (LGTT…FMLF). The segment at 320-358 (LGTTLVVGLLAGVGYFAFMLFRKRLGSMILAFRPRPNYF) is required for mitochondrial localization.

Belongs to the GST superfamily. In terms of assembly, homodimer. In terms of processing, ubiquitinated by PRKN during mitophagy, leading to its degradation and enhancement of mitophagy. Deubiquitinated by USP30. As to expression, highly expressed in whole brain and spinal cord. Predominant expression in central tissues of the nervous system not only in neurons but also in Schwann cells.

It localises to the mitochondrion outer membrane. The protein localises to the cytoplasm. Regulates the mitochondrial network by promoting mitochondrial fission. The polypeptide is Ganglioside-induced differentiation-associated protein 1 (GDAP1) (Homo sapiens (Human)).